Consider the following 545-residue polypeptide: MSTHVPRRVALVTLGCSRNEVDSEELAGRLAAQGWELVADAADADAVLVNTCGFVDAAKKDSIDALLAADDLRAGDGEPAGAGPRAVVAVGCLAERYGNELAASLPEADAVLGFDAYPSIGEHLDAVLGGATVPAHTPRDRRTLLPITPVERGASANVAVHVPGHARGVAGGSAAGSPGRRRLTAGPVAALKISSGCDRRCAFCAIPSFRGSHVSRPADDVLAEAEWLAGEGARELVLVSENSTSYGKDLGDLRALEKLLPQLAAVPGIVRVRTVYLQPAELRPSLLEVLLTTPGLAPYLDLSFQHASPAVLRRMRRFGGSEHFLDLLDRGRGLLPGLGARSNVIVGFPGETEADVDILAEFLEAAELDAVGVFGYSDEEGTEAVSLPGKIAEEEIERRRVQITDLVEQLTATRAQERIGSRVQVLVEEITDGIAAGCAGHQQPDADGSCLVRLPGPAGAAAGPPAGGPSGTGQPGLPGQPGQPGVEVGDLIEARVVATEGVDLVAEFTAVLDRARPSAGRGEAAPSATGARATVLVGRPRADGT.

Positions 7 to 129 (RRVALVTLGC…IGEHLDAVLG (123 aa)) constitute an MTTase N-terminal domain. 6 residues coordinate [4Fe-4S] cluster: cysteine 16, cysteine 52, cysteine 92, cysteine 197, cysteine 201, and cysteine 204. Positions 183-414 (LTAGPVAALK…DLVEQLTATR (232 aa)) constitute a Radical SAM core domain. Positions 416–510 (QERIGSRVQV…GVDLVAEFTA (95 aa)) constitute a TRAM domain. Disordered stretches follow at residues 454 to 486 (LPGPAGAAAGPPAGGPSGTGQPGLPGQPGQPGV) and 516 to 545 (RPSAGRGEAAPSATGARATVLVGRPRADGT). Residues 455–464 (PGPAGAAAGP) show a composition bias toward low complexity.

This sequence belongs to the methylthiotransferase family. RimO subfamily. [4Fe-4S] cluster is required as a cofactor.

The protein localises to the cytoplasm. It catalyses the reaction L-aspartate(89)-[ribosomal protein uS12]-hydrogen + (sulfur carrier)-SH + AH2 + 2 S-adenosyl-L-methionine = 3-methylsulfanyl-L-aspartate(89)-[ribosomal protein uS12]-hydrogen + (sulfur carrier)-H + 5'-deoxyadenosine + L-methionine + A + S-adenosyl-L-homocysteine + 2 H(+). Catalyzes the methylthiolation of an aspartic acid residue of ribosomal protein uS12. This chain is Ribosomal protein uS12 methylthiotransferase RimO, found in Frankia alni (strain DSM 45986 / CECT 9034 / ACN14a).